Reading from the N-terminus, the 302-residue chain is Methionyl-tRNA formyltransferase (302 aa).

108–111 lines the (6S)-5,6,7,8-tetrahydrofolate pocket; it reads SLLP. Residues 276-288 are compositionally biased toward basic and acidic residues; the sequence is REGKRPMEPEEFL. Positions 276–302 are disordered; sequence REGKRPMEPEEFLRGFPLPEGSRAHTA.

It belongs to the Fmt family.

It carries out the reaction L-methionyl-tRNA(fMet) + (6R)-10-formyltetrahydrofolate = N-formyl-L-methionyl-tRNA(fMet) + (6S)-5,6,7,8-tetrahydrofolate + H(+). Attaches a formyl group to the free amino group of methionyl-tRNA(fMet). The formyl group appears to play a dual role in the initiator identity of N-formylmethionyl-tRNA by promoting its recognition by IF2 and preventing the misappropriation of this tRNA by the elongation apparatus. The polypeptide is Methionyl-tRNA formyltransferase (Cereibacter sphaeroides (strain KD131 / KCTC 12085) (Rhodobacter sphaeroides)).